Here is a 335-residue protein sequence, read N- to C-terminus: MKRIAVLTSGGDAPGMNAAIRAVVRQAISEGMEVFGIYDGYAGMVAGEIHPLDAASVGDIISRGGTFLHSARYPEFAQLEGQLKGIEQLKKHGIEGVVVIGGDGSYHGAMRLTEHGFPAIGLPGTIDNDIVGTDFTIGFDTAVTTAMDAIDKIRDTSSSHRRTFVIEVMGRNAGDIALWAGIATGADEIIIPEAGFKMEDIVASIKAGYECGKKHNIIVLAEGVMSAAEFGQKLKEAGDISDLRVTELGHIQRGGSPTPRDRVLASRMGAHAVKLLKEGIGGVAVGIRNEKMVENPILGTAEEGALFSLTAEGKIVVNNPHEADIELSSLNKSLS.

Position 11 (Gly11) interacts with ATP. Residue 21–25 (RAVVR) participates in ADP binding. ATP-binding positions include 72 to 73 (RY) and 102 to 105 (GDGS). Asp103 lines the Mg(2+) pocket. 125 to 127 (TID) serves as a coordination point for substrate. The Proton acceptor role is filled by Asp127. Position 154 (Arg154) interacts with ADP. Residues Arg162 and 169–171 (MGR) contribute to the substrate site. Residues 185 to 187 (GAD) and 213 to 215 (KKH) each bind ADP. Residues Glu222, Arg244, and 250–253 (HIQR) each bind substrate.

This sequence belongs to the phosphofructokinase type A (PFKA) family. ATP-dependent PFK group I subfamily. Prokaryotic clade 'B1' sub-subfamily. As to quaternary structure, homotetramer. Requires Mg(2+) as cofactor.

The protein localises to the cytoplasm. It catalyses the reaction beta-D-fructose 6-phosphate + ATP = beta-D-fructose 1,6-bisphosphate + ADP + H(+). The protein operates within carbohydrate degradation; glycolysis; D-glyceraldehyde 3-phosphate and glycerone phosphate from D-glucose: step 3/4. Allosterically activated by ADP and other diphosphonucleosides, and allosterically inhibited by phosphoenolpyruvate. Its function is as follows. Catalyzes the phosphorylation of D-fructose 6-phosphate to fructose 1,6-bisphosphate by ATP, the first committing step of glycolysis. The protein is ATP-dependent 6-phosphofructokinase of Streptococcus pneumoniae (strain ATCC BAA-255 / R6).